The chain runs to 259 residues: 14-3-3-like protein (259 aa).

The interval aspartate 237–glutamine 259 is disordered. Basic and acidic residues predominate over residues arginine 247–glutamine 259.

This sequence belongs to the 14-3-3 family. As to expression, leaves specific.

The sequence is that of 14-3-3-like protein from Solanum tuberosum (Potato).